We begin with the raw amino-acid sequence, 376 residues long: Copper-containing nitrite reductase (376 aa).

The segment at residues 1 to 33 (MSEQFQMTRRSMLAGAAIAGAVTPLIGAVSAHA) is a signal peptide (tat-type signal). 2 consecutive Plastocyanin-like domains span residues 98 to 193 (MTFN…IMVL) and 258 to 359 (GAVG…FAVT). Histidine 131, histidine 136, histidine 171, cysteine 172, histidine 181, methionine 186, and histidine 342 together coordinate Cu cation.

It belongs to the multicopper oxidase family. As to quaternary structure, homotrimer. It depends on Cu(2+) as a cofactor. Requires Cu(+) as cofactor. The cofactor is FAD. Post-translationally, predicted to be exported by the Tat system. The position of the signal peptide cleavage has not been experimentally proven.

It localises to the periplasm. The enzyme catalyses nitric oxide + Fe(III)-[cytochrome c] + H2O = Fe(II)-[cytochrome c] + nitrite + 2 H(+). The protein operates within nitrogen metabolism; nitrate reduction (denitrification); dinitrogen from nitrate: step 2/4. This Rhizobium meliloti (strain 1021) (Ensifer meliloti) protein is Copper-containing nitrite reductase (nirK).